We begin with the raw amino-acid sequence, 331 residues long: Laforin (331 aa).

In terms of domain architecture, CBM20 spans 1–124 (MRFRFGVVVP…NNLVDGVYCL (124 aa)). Position 25 is a phosphoserine; by AMPK (serine 25). Residues tryptophan 32, lysine 87, 103–107 (GPHHD), aspartate 197, aspartate 235, and arginine 241 contribute to the substrate site. Residues 156–323 (HYSRILPNIW…EEDFFQKFGK (168 aa)) form the Tyrosine-protein phosphatase domain. Catalysis depends on cysteine 266, which acts as the Phosphocysteine intermediate. Positions 266–272 (CNAGVGR) match the Glucan phosphatase signature motif CXAGXGR motif. Substrate contacts are provided by residues 267–272 (NAGVGR) and tyrosine 304.

It belongs to the protein-tyrosine phosphatase family. As to quaternary structure, homodimer. Interacts with itself. Interacts with PPP1R3B, PPP1R3C, PPP1R3D, HIRIP5, and EPM2AIP1. Binds glycogen and Lafora bodies. Interacts with NHLRC1/malin (via the NHL repeats). Forms a complex with NHLRC1/malin and HSP70. Interacts with PPP1R3D; in the presence of NHLC1/malin the interaction leads to ubiquitination and autophagic degradation of PPP1R3D. Interacts (via the phosphatase domain) with MAPT/Tau; the interaction dephosphorylates MAPT. Interacts with PRDM8. Polyubiquitinated by NHLRC1/malin. In terms of processing, phosphorylation on Ser-25 by AMPK affects the phosphatase activity of the enzyme and its ability to homodimerize and interact with NHLRC1, PPP1R3C or PRKAA2.

It is found in the cytoplasm. It localises to the endoplasmic reticulum membrane. Its subcellular location is the cell membrane. The catalysed reaction is O-phospho-L-tyrosyl-[protein] + H2O = L-tyrosyl-[protein] + phosphate. It catalyses the reaction O-phospho-L-seryl-[protein] + H2O = L-seryl-[protein] + phosphate. The enzyme catalyses O-phospho-L-threonyl-[protein] + H2O = L-threonyl-[protein] + phosphate. In terms of biological role, plays an important role in preventing glycogen hyperphosphorylation and the formation of insoluble aggregates, via its activity as glycogen phosphatase, and by promoting the ubiquitination of proteins involved in glycogen metabolism via its interaction with the E3 ubiquitin ligase NHLRC1/malin. Dephosphorylates phosphotyrosine and synthetic substrates, such as para-nitrophenylphosphate (pNPP), and has low activity with phosphoserine and phosphothreonine substrates (in vitro). Has also been shown to dephosphorylate MAPT. Shows strong phosphatase activity towards complex carbohydrates in vitro, avoiding glycogen hyperphosphorylation which is associated with reduced branching and formation of insoluble aggregates. Forms a complex with NHLRC1/malin and HSP70, which suppresses the cellular toxicity of misfolded proteins by promoting their degradation through the ubiquitin-proteasome system (UPS). Acts as a scaffold protein to facilitate PPP1R3C/PTG ubiquitination by NHLRC1/malin. Also promotes proteasome-independent protein degradation through the macroautophagy pathway. The protein is Laforin (EPM2A) of Canis lupus familiaris (Dog).